Consider the following 204-residue polypeptide: uncharacterized protein (204 aa).

A compositionally biased stretch (polar residues) spans 1-10 (MQQAITQQEK). Disordered regions lie at residues 1–20 (MQQA…LPNR) and 70–99 (DEAR…KNTE). The SPOR domain occupies 131–204 (VRDSKKFGLQ…TVTDCVVIGM (74 aa)).

To E.coli FtsN repeat regions.

This is an uncharacterized protein from Haemophilus influenzae (strain ATCC 51907 / DSM 11121 / KW20 / Rd).